We begin with the raw amino-acid sequence, 138 residues long: Small ribosomal subunit protein uS11c (138 aa).

Positions 1–24 (MAKSPPRSGSRRPGRIGSRKSGRR) are disordered. The span at 9–24 (GSRRPGRIGSRKSGRR) shows a compositional bias: basic residues.

Belongs to the universal ribosomal protein uS11 family. As to quaternary structure, part of the 30S ribosomal subunit.

The protein resides in the plastid. The protein localises to the chloroplast. The chain is Small ribosomal subunit protein uS11c from Citrus sinensis (Sweet orange).